The following is a 102-amino-acid chain: Small ribosomal subunit protein uS10 (102 aa).

Belongs to the universal ribosomal protein uS10 family. As to quaternary structure, part of the 30S ribosomal subunit.

Its function is as follows. Involved in the binding of tRNA to the ribosomes. The protein is Small ribosomal subunit protein uS10 of Rhizobium etli (strain CIAT 652).